A 198-amino-acid polypeptide reads, in one-letter code: MYEGPVQDLIDELGRLPGIGPKSAQRIAFHLLAAEPADVTRLQEVLQKVKEGVVFCDICGNVSEEPTCRICRDARRDPAVVCVVEEPKDVLAVERTREFRGRYHVLGGALDPLSGVGPDQLRVRELLTRIGRDEITEVIIATDPNTEGEATATYLVRMLRDFPGLNVTRLASGLPMGGDLEFADELTLGRALSGRRAV.

Residues 56–71 (CDICGNVSEEPTCRIC) form a C4-type zinc finger. Residues 79 to 175 (AVVCVVEEPK…NVTRLASGLP (97 aa)) enclose the Toprim domain.

The protein belongs to the RecR family.

In terms of biological role, may play a role in DNA repair. It seems to be involved in an RecBC-independent recombinational process of DNA repair. It may act with RecF and RecO. The polypeptide is Recombination protein RecR (Saccharopolyspora erythraea (strain ATCC 11635 / DSM 40517 / JCM 4748 / NBRC 13426 / NCIMB 8594 / NRRL 2338)).